The following is a 46-amino-acid chain: Large ribosomal subunit protein bL34c (46 aa).

Belongs to the bacterial ribosomal protein bL34 family.

The protein resides in the plastid. It localises to the chloroplast. The protein is Large ribosomal subunit protein bL34c of Pyropia yezoensis (Susabi-nori).